The chain runs to 61 residues: MDPNCSCATRDSCACASSCKCKECKCTSCKKSCCSCCPAGCTKCAQGCICKGASDKCSCCA.

Position 1 is an N-acetylmethionine (M1). Positions 1–29 are beta; the sequence is MDPNCSCATRDSCACASSCKCKECKCTSC. A divalent metal cation-binding residues include C5, C7, C13, C15, C19, C21, C24, C26, C29, C33, C34, C36, C37, C41, C44, C48, C50, C57, C59, and C60. The tract at residues 30-61 is alpha; the sequence is KKSCCSCCPAGCTKCAQGCICKGASDKCSCCA.

The protein belongs to the metallothionein superfamily. Type 1 family. As to quaternary structure, monomer.

Its function is as follows. Metallothioneins have a high content of cysteine residues that bind various heavy metals; these proteins are transcriptionally regulated by both heavy metals and glucocorticoids. This Oryctolagus cuniculus (Rabbit) protein is Metallothionein-2D.